We begin with the raw amino-acid sequence, 362 residues long: Aspartate-semialdehyde dehydrogenase (362 aa).

Positions 15, 16, 17, 18, 40, 43, 87, and 88 each coordinate NADP(+). The active-site Acyl-thioester intermediate is the Cys-154. Position 186 (Gly-186) interacts with NADP(+). His-251 functions as the Proton acceptor in the catalytic mechanism. Position 340 (Asn-340) interacts with NADP(+).

The protein belongs to the aspartate-semialdehyde dehydrogenase family. As to quaternary structure, homotetramer; dimer of dimers.

Its subcellular location is the cytoplasm. The protein resides in the cytosol. It is found in the nucleus. It carries out the reaction L-aspartate 4-semialdehyde + phosphate + NADP(+) = 4-phospho-L-aspartate + NADPH + H(+). Its pathway is amino-acid biosynthesis; L-methionine biosynthesis via de novo pathway; L-homoserine from L-aspartate: step 2/3. It functions in the pathway amino-acid biosynthesis; L-threonine biosynthesis; L-threonine from L-aspartate: step 2/5. Functionally, catalyzes the NADPH-dependent formation of L-aspartate 4-semialdehyde (L-ASA) by the reductive dephosphorylation of 4-phospho-L-aspartate. Mediates the second step in the biosynthesis of amino acids that derive from aspartate (the aspartate family of amino acids), including methioinine and threonine, the latter of which is a precursor to isoleucine. This Trichophyton rubrum (strain ATCC MYA-4607 / CBS 118892) (Athlete's foot fungus) protein is Aspartate-semialdehyde dehydrogenase.